The following is a 122-amino-acid chain: Large ribosomal subunit protein uL14c (122 aa).

This sequence belongs to the universal ribosomal protein uL14 family. In terms of assembly, part of the 50S ribosomal subunit.

Its subcellular location is the plastid. Functionally, binds to 23S rRNA. The polypeptide is Large ribosomal subunit protein uL14c (Euglena longa (Euglenophycean alga)).